The primary structure comprises 1097 residues: DNA-directed RNA polymerase subunit beta (1097 aa).

Residues 1070 to 1097 form a disordered region; it reads LMQDVNPRRNTPSRPTYESLGTSEYEED. Residues 1077–1091 are compositionally biased toward polar residues; sequence RRNTPSRPTYESLGT.

Belongs to the RNA polymerase beta chain family. As to quaternary structure, in cyanobacteria the RNAP catalytic core is composed of 2 alpha, 1 beta, 1 beta', 1 gamma and 1 omega subunit. When a sigma factor is associated with the core the holoenzyme is formed, which can initiate transcription.

It carries out the reaction RNA(n) + a ribonucleoside 5'-triphosphate = RNA(n+1) + diphosphate. DNA-dependent RNA polymerase catalyzes the transcription of DNA into RNA using the four ribonucleoside triphosphates as substrates. In Prochlorococcus marinus (strain MIT 9515), this protein is DNA-directed RNA polymerase subunit beta.